The chain runs to 256 residues: Imidazole glycerol phosphate synthase subunit HisF (256 aa).

Catalysis depends on residues Asp-12 and Asp-131.

Belongs to the HisA/HisF family. In terms of assembly, heterodimer of HisH and HisF.

The protein resides in the cytoplasm. It carries out the reaction 5-[(5-phospho-1-deoxy-D-ribulos-1-ylimino)methylamino]-1-(5-phospho-beta-D-ribosyl)imidazole-4-carboxamide + L-glutamine = D-erythro-1-(imidazol-4-yl)glycerol 3-phosphate + 5-amino-1-(5-phospho-beta-D-ribosyl)imidazole-4-carboxamide + L-glutamate + H(+). Its pathway is amino-acid biosynthesis; L-histidine biosynthesis; L-histidine from 5-phospho-alpha-D-ribose 1-diphosphate: step 5/9. IGPS catalyzes the conversion of PRFAR and glutamine to IGP, AICAR and glutamate. The HisF subunit catalyzes the cyclization activity that produces IGP and AICAR from PRFAR using the ammonia provided by the HisH subunit. The polypeptide is Imidazole glycerol phosphate synthase subunit HisF (Beutenbergia cavernae (strain ATCC BAA-8 / DSM 12333 / CCUG 43141 / JCM 11478 / NBRC 16432 / NCIMB 13614 / HKI 0122)).